The chain runs to 337 residues: MDYKPEPELHSESSERLFSFGVIADIQYADLEDGYNFQGNRRRYYRHSLLHLQGAIEHWNQERSPPRCVLQLGDIIDGYNAQYKASEKSLERVMNTFQMLRVPVHHTWGNHEFYNFSRDYLTNSKLNTKFLEDQIAHHPETVPSEDYYAYHFVPFPKFRFILLDAYDMSVLGVDQSSPKYQQCLKILREHNPNTELNSPQGLREPQFVQFNGGFSPEQLNWLNAVLTFSDRNQEKVVIVSHLPIYPEASDSVCLAWNYRDALAVIWSHKCVVCFFAGHTHDGGYSEDPYGVHHVNIEGVIETAPDSQAFGTVHVYPDKMMLEGRGRVPHRIMNYRKE.

An N-acetylmethionine modification is found at methionine 1. Residues aspartate 25, glutamine 27, aspartate 74, asparagine 110, histidine 241, histidine 278, and histidine 280 each contribute to the Zn(2+) site.

Belongs to the ADPRibase-Mn family. As to quaternary structure, monomer. It depends on Mg(2+) as a cofactor.

The enzyme catalyses CDP-choline + H2O = phosphocholine + CMP + 2 H(+). The catalysed reaction is ADP-D-ribose + H2O = D-ribose 5-phosphate + AMP + 2 H(+). It catalyses the reaction CDP-glycerol + H2O = sn-glycerol 3-phosphate + CMP + 2 H(+). Functionally, hydrolyzes ADP-ribose, IDP-ribose, CDP-glycerol, CDP-choline and CDP-ethanolamine, but not other non-reducing ADP-sugars or CDP-glucose. May be involved in immune cell signaling as suggested by the second-messenger role of ADP-ribose, which activates TRPM2 as a mediator of oxidative/nitrosative stress. This chain is Manganese-dependent ADP-ribose/CDP-alcohol diphosphatase (ADPRM), found in Bos taurus (Bovine).